A 155-amino-acid polypeptide reads, in one-letter code: Ribosomal RNA large subunit methyltransferase H (155 aa).

Residues leucine 73, glycine 104, and isoleucine 123–phenylalanine 128 each bind S-adenosyl-L-methionine.

The protein belongs to the RNA methyltransferase RlmH family. In terms of assembly, homodimer.

The protein localises to the cytoplasm. It carries out the reaction pseudouridine(1915) in 23S rRNA + S-adenosyl-L-methionine = N(3)-methylpseudouridine(1915) in 23S rRNA + S-adenosyl-L-homocysteine + H(+). Its function is as follows. Specifically methylates the pseudouridine at position 1915 (m3Psi1915) in 23S rRNA. This Francisella philomiragia subsp. philomiragia (strain ATCC 25017 / CCUG 19701 / FSC 153 / O#319-036) protein is Ribosomal RNA large subunit methyltransferase H.